Here is a 566-residue protein sequence, read N- to C-terminus: Oxygen-dependent choline dehydrogenase (566 aa).

Position 7 to 36 (7 to 36 (DYIICGAGSAGNVLATRLTEDPDVTVLLLE)) interacts with FAD. The tract at residues 180-202 (NGYQQEGFGPMDRTVTPKGRRAS) is disordered. His-474 functions as the Proton acceptor in the catalytic mechanism.

Belongs to the GMC oxidoreductase family. FAD is required as a cofactor.

The catalysed reaction is choline + A = betaine aldehyde + AH2. It carries out the reaction betaine aldehyde + NAD(+) + H2O = glycine betaine + NADH + 2 H(+). Its pathway is amine and polyamine biosynthesis; betaine biosynthesis via choline pathway; betaine aldehyde from choline (cytochrome c reductase route): step 1/1. Its function is as follows. Involved in the biosynthesis of the osmoprotectant glycine betaine. Catalyzes the oxidation of choline to betaine aldehyde and betaine aldehyde to glycine betaine at the same rate. The chain is Oxygen-dependent choline dehydrogenase from Burkholderia cenocepacia (strain HI2424).